A 565-amino-acid chain; its full sequence is Urocanate hydratase (565 aa).

NAD(+) contacts are provided by residues 58 to 59 (GG), Gln136, 182 to 184 (GMG), Glu202, Arg207, 245 to 246 (NA), 266 to 270 (QTSAH), 276 to 277 (YL), and Tyr325. Residue Cys413 is part of the active site. Residue Gly495 coordinates NAD(+).

This sequence belongs to the urocanase family. The cofactor is NAD(+).

Its subcellular location is the cytoplasm. The catalysed reaction is 4-imidazolone-5-propanoate = trans-urocanate + H2O. Its pathway is amino-acid degradation; L-histidine degradation into L-glutamate; N-formimidoyl-L-glutamate from L-histidine: step 2/3. Catalyzes the conversion of urocanate to 4-imidazolone-5-propionate. This Vibrio vulnificus (strain YJ016) protein is Urocanate hydratase.